Reading from the N-terminus, the 218-residue chain is UPF0502 protein Mmwyl1_3509 (218 aa).

This sequence belongs to the UPF0502 family.

The polypeptide is UPF0502 protein Mmwyl1_3509 (Marinomonas sp. (strain MWYL1)).